Here is a 518-residue protein sequence, read N- to C-terminus: Anthranilate synthase component 1 (518 aa).

L-tryptophan contacts are provided by residues serine 38 and 283–285 (PYM). A chorismate-binding site is contributed by 324–325 (GT). A Mg(2+)-binding site is contributed by glutamate 357. Chorismate contacts are provided by residues tyrosine 445, arginine 465, 479–481 (GAG), and glycine 481. A Mg(2+)-binding site is contributed by glutamate 494.

It belongs to the anthranilate synthase component I family. Heterotetramer consisting of two non-identical subunits: a beta subunit (TrpG) and a large alpha subunit (TrpE). It depends on Mg(2+) as a cofactor.

The catalysed reaction is chorismate + L-glutamine = anthranilate + pyruvate + L-glutamate + H(+). It participates in amino-acid biosynthesis; L-tryptophan biosynthesis; L-tryptophan from chorismate: step 1/5. With respect to regulation, feedback inhibited by tryptophan. Functionally, part of a heterotetrameric complex that catalyzes the two-step biosynthesis of anthranilate, an intermediate in the biosynthesis of L-tryptophan. In the first step, the glutamine-binding beta subunit (TrpG) of anthranilate synthase (AS) provides the glutamine amidotransferase activity which generates ammonia as a substrate that, along with chorismate, is used in the second step, catalyzed by the large alpha subunit of AS (TrpE) to produce anthranilate. In the absence of TrpG, TrpE can synthesize anthranilate directly from chorismate and high concentrations of ammonia. This chain is Anthranilate synthase component 1 (trpE), found in Corynebacterium glutamicum (strain ATCC 13032 / DSM 20300 / JCM 1318 / BCRC 11384 / CCUG 27702 / LMG 3730 / NBRC 12168 / NCIMB 10025 / NRRL B-2784 / 534).